A 225-amino-acid chain; its full sequence is ATP synthase subunit a (225 aa).

A run of 5 helical transmembrane segments spans residues 16-36 (LFVY…VAKL), 79-99 (LVAT…IPGF), 105-125 (SLNL…FEGI), 176-196 (LFLL…AYAL), and 202-222 (VLQT…AVAI).

It belongs to the ATPase A chain family. F-type ATPases have 2 components, CF(1) - the catalytic core - and CF(0) - the membrane proton channel. CF(1) has five subunits: alpha(3), beta(3), gamma(1), delta(1), epsilon(1). CF(0) has three main subunits: a(1), b(2) and c(9-12). The alpha and beta chains form an alternating ring which encloses part of the gamma chain. CF(1) is attached to CF(0) by a central stalk formed by the gamma and epsilon chains, while a peripheral stalk is formed by the delta and b chains.

It localises to the cell inner membrane. Key component of the proton channel; it plays a direct role in the translocation of protons across the membrane. In Campylobacter curvus (strain 525.92), this protein is ATP synthase subunit a.